The chain runs to 194 residues: Inosine triphosphate pyrophosphatase (194 aa).

The residue at position 2 (A2) is an N-acetylalanine. Residue T14–K19 coordinates ITP. E44 is a Mg(2+) binding site. ITP-binding positions include K56, D72–T73, K89, F149–D152, K172, and H177–R178.

Belongs to the HAM1 NTPase family. Homodimer. Mg(2+) is required as a cofactor. As to expression, ubiquitous. Highly expressed in heart, liver, sex glands, thyroid and adrenal gland.

The protein localises to the cytoplasm. It catalyses the reaction ITP + H2O = IMP + diphosphate + H(+). The enzyme catalyses dITP + H2O = dIMP + diphosphate + H(+). It carries out the reaction XTP + H2O = XMP + diphosphate + H(+). The catalysed reaction is N(6)-hydroxy-dATP + H2O = N(6)-hydroxy-dAMP + diphosphate + H(+). Functionally, pyrophosphatase that hydrolyzes the non-canonical purine nucleotides inosine triphosphate (ITP), deoxyinosine triphosphate (dITP) as well as 2'-deoxy-N-6-hydroxylaminopurine triphosphate (dHAPTP) and xanthosine 5'-triphosphate (XTP) to their respective monophosphate derivatives. The enzyme does not distinguish between the deoxy- and ribose forms. Probably excludes non-canonical purines from RNA and DNA precursor pools, thus preventing their incorporation into RNA and DNA and avoiding chromosomal lesions. This Homo sapiens (Human) protein is Inosine triphosphate pyrophosphatase.